A 130-amino-acid chain; its full sequence is Small ribosomal subunit protein uS11 (130 aa).

It belongs to the universal ribosomal protein uS11 family. Part of the 30S ribosomal subunit. Interacts with proteins S7 and S18. Binds to IF-3.

In terms of biological role, located on the platform of the 30S subunit, it bridges several disparate RNA helices of the 16S rRNA. Forms part of the Shine-Dalgarno cleft in the 70S ribosome. The protein is Small ribosomal subunit protein uS11 of Pseudoalteromonas atlantica (strain T6c / ATCC BAA-1087).